The sequence spans 324 residues: Fructose-1,6-bisphosphatase class 1 (324 aa).

Glutamate 88, aspartate 107, leucine 109, and aspartate 110 together coordinate Mg(2+). Substrate contacts are provided by residues 110–113, asparagine 199, and lysine 265; that span reads DGSS. Glutamate 271 lines the Mg(2+) pocket.

It belongs to the FBPase class 1 family. As to quaternary structure, homotetramer. It depends on Mg(2+) as a cofactor.

It localises to the cytoplasm. The enzyme catalyses beta-D-fructose 1,6-bisphosphate + H2O = beta-D-fructose 6-phosphate + phosphate. It functions in the pathway carbohydrate biosynthesis; gluconeogenesis. The protein is Fructose-1,6-bisphosphatase class 1 of Neisseria meningitidis serogroup C (strain 053442).